Reading from the N-terminus, the 106-residue chain is Translation initiation factor 1A 2 (106 aa).

Residues 1–24 form a disordered region; the sequence is MRKRREGTANNSPTPEVTRVRTPR. The region spanning 18 to 92 is the S1-like domain; that stretch reads TRVRTPRKEN…SKADVIWKYT (75 aa).

The protein belongs to the eIF-1A family.

Seems to be required for maximal rate of protein biosynthesis. Enhances ribosome dissociation into subunits and stabilizes the binding of the initiator Met-tRNA(I) to 40 S ribosomal subunits. The polypeptide is Translation initiation factor 1A 2 (eIF1A2) (Methanosarcina mazei (strain ATCC BAA-159 / DSM 3647 / Goe1 / Go1 / JCM 11833 / OCM 88) (Methanosarcina frisia)).